A 106-amino-acid chain; its full sequence is 3-oxoacyl-[acyl-carrier-protein] reductase (106 aa).

It belongs to the short-chain dehydrogenases/reductases (SDR) family. In terms of assembly, homotetramer. In terms of tissue distribution, mesocarp.

It is found in the plastid. It localises to the chloroplast. It carries out the reaction a (3R)-hydroxyacyl-[ACP] + NADP(+) = a 3-oxoacyl-[ACP] + NADPH + H(+). It participates in lipid metabolism; fatty acid biosynthesis. The chain is 3-oxoacyl-[acyl-carrier-protein] reductase from Persea americana (Avocado).